Reading from the N-terminus, the 143-residue chain is Putative pre-16S rRNA nuclease (143 aa).

Belongs to the YqgF nuclease family.

It is found in the cytoplasm. Functionally, could be a nuclease involved in processing of the 5'-end of pre-16S rRNA. The sequence is that of Putative pre-16S rRNA nuclease from Ralstonia pickettii (strain 12J).